The chain runs to 417 residues: Gamma-glutamyl phosphate reductase (417 aa).

The protein belongs to the gamma-glutamyl phosphate reductase family.

The protein resides in the cytoplasm. It carries out the reaction L-glutamate 5-semialdehyde + phosphate + NADP(+) = L-glutamyl 5-phosphate + NADPH + H(+). It functions in the pathway amino-acid biosynthesis; L-proline biosynthesis; L-glutamate 5-semialdehyde from L-glutamate: step 2/2. Functionally, catalyzes the NADPH-dependent reduction of L-glutamate 5-phosphate into L-glutamate 5-semialdehyde and phosphate. The product spontaneously undergoes cyclization to form 1-pyrroline-5-carboxylate. This Pectobacterium carotovorum subsp. carotovorum (strain PC1) protein is Gamma-glutamyl phosphate reductase.